A 129-amino-acid chain; its full sequence is Large ribosomal subunit protein bL20 (129 aa).

Belongs to the bacterial ribosomal protein bL20 family.

Binds directly to 23S ribosomal RNA and is necessary for the in vitro assembly process of the 50S ribosomal subunit. It is not involved in the protein synthesizing functions of that subunit. This chain is Large ribosomal subunit protein bL20, found in Kineococcus radiotolerans (strain ATCC BAA-149 / DSM 14245 / SRS30216).